The following is a 353-amino-acid chain: S-adenosylmethionine:tRNA ribosyltransferase-isomerase (353 aa).

It belongs to the QueA family. As to quaternary structure, monomer.

It localises to the cytoplasm. The enzyme catalyses 7-aminomethyl-7-carbaguanosine(34) in tRNA + S-adenosyl-L-methionine = epoxyqueuosine(34) in tRNA + adenine + L-methionine + 2 H(+). It participates in tRNA modification; tRNA-queuosine biosynthesis. Functionally, transfers and isomerizes the ribose moiety from AdoMet to the 7-aminomethyl group of 7-deazaguanine (preQ1-tRNA) to give epoxyqueuosine (oQ-tRNA). The protein is S-adenosylmethionine:tRNA ribosyltransferase-isomerase of Dinoroseobacter shibae (strain DSM 16493 / NCIMB 14021 / DFL 12).